A 370-amino-acid polypeptide reads, in one-letter code: Myomodulin neuropeptides 1 (370 aa).

A signal peptide spans 1–18 (MQVYMLLPLAVFASLTYQ). The propeptide occupies 19-50 (GACEETAAAQTSSDASTSSASSEHAENELSRA). Low complexity predominate over residues 28 to 40 (QTSSDASTSSASS). The disordered stretch occupies residues 28 to 52 (QTSSDASTSSASSEHAENELSRAKR). Leu-60 and Leu-69 each carry leucine amide. The propeptide occupies 73–190 (GGPVEPESEE…EPEEGGLGEE (118 aa)). Leu-199 and Leu-209 each carry leucine amide. Residues 210-226 (GKREGEEGDEMDKKQDE) show a composition bias toward basic and acidic residues. Residues 210-230 (GKREGEEGDEMDKKQDESLND) form a disordered region. Residues 213 to 237 (EGEEGDEMDKKQDESLNDDFENDDI) constitute a propeptide that is removed on maturation. Leu-246, Leu-256, Leu-266, Leu-276, Leu-286, Leu-296, Leu-306, Leu-316, Leu-326, Leu-336, and Leu-346 each carry leucine amide. A disordered region spans residues 344–370 (LRLGKRDDDEKEKKSLNMSRLGKRSTQ). Positions 347–358 (GKRDDDEKEKKS) are enriched in basic and acidic residues. Residues 350–355 (DDDEKE) constitute a propeptide that is removed on maturation. Residue Leu-364 is modified to Leucine amide. A propeptide spanning residues 368–370 (STQ) is cleaved from the precursor.

Expressed in all ganglia of the CNS, but only in a subset of neurons including L10 in the abdominal ganglion and B16 in the buccal ganglion.

The protein localises to the secreted. Its function is as follows. Exogenous application of myomodulins potentiates ARC muscle contraction. In Aplysia californica (California sea hare), this protein is Myomodulin neuropeptides 1 (MYOMOD1).